Consider the following 252-residue polypeptide: Ribosomal RNA small subunit methyltransferase J (252 aa).

S-adenosyl-L-methionine contacts are provided by residues 101–102, 117–118, 153–154, and D171; these read RD, ER, and SS.

It belongs to the methyltransferase superfamily. RsmJ family.

Its subcellular location is the cytoplasm. It carries out the reaction guanosine(1516) in 16S rRNA + S-adenosyl-L-methionine = N(2)-methylguanosine(1516) in 16S rRNA + S-adenosyl-L-homocysteine + H(+). In terms of biological role, specifically methylates the guanosine in position 1516 of 16S rRNA. This chain is Ribosomal RNA small subunit methyltransferase J, found in Salmonella choleraesuis (strain SC-B67).